The sequence spans 350 residues: N-acetyllactosaminide beta-1,3-N-acetylglucosaminyltransferase 4 (350 aa).

At 1–4 (MLPR) the chain is on the cytoplasmic side. The chain crosses the membrane as a helical; Signal-anchor for type II membrane protein span at residues 5–25 (LGCVLFCSLVVLLLSCLLLLK). Residues 26–350 (ERIPAGSSKA…RLKCAATHKP (325 aa)) lie on the Lumenal side of the membrane. 2 N-linked (GlcNAc...) asparagine glycosylation sites follow: asparagine 53 and asparagine 166.

Belongs to the glycosyltransferase 31 family.

It is found in the golgi apparatus membrane. The enzyme catalyses a beta-D-galactosyl-(1-&gt;4)-N-acetyl-beta-D-glucosaminyl derivative + UDP-N-acetyl-alpha-D-glucosamine = an N-acetyl-beta-D-glucosaminyl-(1-&gt;3)-beta-D-galactosyl-(1-&gt;4)-N-acetyl-beta-D-glucosaminyl derivative + UDP + H(+). It functions in the pathway protein modification; protein glycosylation. Its function is as follows. Beta-1,3-N-acetylglucosaminyltransferase involved in the synthesis of poly-N-acetyllactosamine. Has activity for type 2 oligosaccharides. In Mus musculus (Mouse), this protein is N-acetyllactosaminide beta-1,3-N-acetylglucosaminyltransferase 4 (B3gnt4).